The primary structure comprises 1483 residues: Ubiquitin fusion degradation protein 4 (1483 aa).

Positions 1–117 are disordered; it reads MSENNSHNLD…NNEFGSNPLH (117 aa). The segment covering 8-18 has biased composition (basic and acidic residues); that stretch reads NLDEHESHSEN. A compositionally biased stretch (acidic residues) spans 61–70; it reads EADDGEDDDN. At threonine 87 the chain carries Phosphothreonine. Lysine 349 participates in a covalent cross-link: Glycyl lysine isopeptide (Lys-Gly) (interchain with G-Cter in ubiquitin). Positions 1007–1081 are K-box; sequence CGVKSDSFIN…LIQLWKNKSK (75 aa). One can recognise an HECT domain in the interval 1376–1483; it reads AEHGYTMDSS…EEGAGAFLLS (108 aa). Cysteine 1450 functions as the Glycyl thioester intermediate in the catalytic mechanism.

This sequence belongs to the UPL family. K-HECT subfamily.

The catalysed reaction is S-ubiquitinyl-[E2 ubiquitin-conjugating enzyme]-L-cysteine + [acceptor protein]-L-lysine = [E2 ubiquitin-conjugating enzyme]-L-cysteine + N(6)-ubiquitinyl-[acceptor protein]-L-lysine.. Functionally, E3 ubiquitin-protein ligase which accepts ubiquitin from an E2 ubiquitin-conjugating enzyme in the form of a thioester and then directly transfers the ubiquitin to targeted substrates. The polypeptide is Ubiquitin fusion degradation protein 4 (UFD4) (Saccharomyces cerevisiae (strain ATCC 204508 / S288c) (Baker's yeast)).